Consider the following 297-residue polypeptide: GTPase Era (297 aa).

One can recognise an Era-type G domain in the interval 7-174 (RSGFVSIIGR…VEVVHGFIPA (168 aa)). Positions 15–22 (GRPNVGKS) are G1. A GTP-binding site is contributed by 15-22 (GRPNVGKS). The segment at 41–45 (QTTRN) is G2. Residues 62-65 (DTPG) form a G3 region. Residues 62–66 (DTPGI) and 124–127 (NKID) each bind GTP. Positions 124-127 (NKID) are G4. Residues 153 to 155 (VSA) form a G5 region. The KH type-2 domain maps to 205–282 (THDEVPYSVA…FLELFVRVSK (78 aa)).

This sequence belongs to the TRAFAC class TrmE-Era-EngA-EngB-Septin-like GTPase superfamily. Era GTPase family. As to quaternary structure, monomer.

The protein localises to the cytoplasm. Its subcellular location is the cell inner membrane. Its function is as follows. An essential GTPase that binds both GDP and GTP, with rapid nucleotide exchange. Plays a role in 16S rRNA processing and 30S ribosomal subunit biogenesis and possibly also in cell cycle regulation and energy metabolism. The polypeptide is GTPase Era (Geotalea uraniireducens (strain Rf4) (Geobacter uraniireducens)).